Reading from the N-terminus, the 221-residue chain is MAGNPANTESHDDDALHRRGLMFILSSPSGAGKTTIARKLLSEDSEIAMSVSVTTRPMRPGEVDGKDYFFVEPAEFERMVEANEFYEWATVFGNCYGTPKAHIRERLKTGGDVLFDIDWQGTQQLYQKAQADVVRVFILPPSLDELRRRLTGRGTDSAEVIAARMDRAQAEISHWDGYDYVVVNDDVDGCFGKVREILAAERMRRTRQTGLIDFVRGLMRG.

The Guanylate kinase-like domain occupies 20–199 (GLMFILSSPS…CFGKVREILA (180 aa)). 27–34 (SPSGAGKT) is an ATP binding site.

It belongs to the guanylate kinase family.

The protein resides in the cytoplasm. It catalyses the reaction GMP + ATP = GDP + ADP. In terms of biological role, essential for recycling GMP and indirectly, cGMP. The chain is Guanylate kinase from Novosphingobium aromaticivorans (strain ATCC 700278 / DSM 12444 / CCUG 56034 / CIP 105152 / NBRC 16084 / F199).